The chain runs to 23 residues: U1-poneritoxin-Da3b (23 aa).

The protein belongs to the non-disulfide-bridged peptide (NDBP) superfamily. Medium-length antimicrobial peptide (group 3) family. Ponericin-W subfamily. As to expression, expressed by the venom gland.

The protein localises to the secreted. It localises to the target cell membrane. Its function is as follows. May have antimicrobial properties, like most ant linear peptides. May act by disrupting the integrity of the bacterial cell membrane. The protein is U1-poneritoxin-Da3b of Dinoponera australis (Giant neotropical hunting ant).